A 158-amino-acid chain; its full sequence is Siroheme decarboxylase beta subunit (158 aa).

The protein belongs to the Ahb/Nir family. In terms of assembly, forms a heterodimer composed of AhbA and AhbB.

The catalysed reaction is siroheme + 2 H(+) = 12,18-didecarboxysiroheme + 2 CO2. The protein operates within porphyrin-containing compound metabolism; protoheme biosynthesis. Its function is as follows. Involved in siroheme-dependent heme b biosynthesis. Catalyzes the decarboxylation of siroheme into didecarboxysiroheme. This is Siroheme decarboxylase beta subunit from Oleidesulfovibrio alaskensis (strain ATCC BAA-1058 / DSM 17464 / G20) (Desulfovibrio alaskensis).